An 82-amino-acid polypeptide reads, in one-letter code: Exodeoxyribonuclease 7 small subunit (82 aa).

This sequence belongs to the XseB family. In terms of assembly, heterooligomer composed of large and small subunits.

It localises to the cytoplasm. The enzyme catalyses Exonucleolytic cleavage in either 5'- to 3'- or 3'- to 5'-direction to yield nucleoside 5'-phosphates.. In terms of biological role, bidirectionally degrades single-stranded DNA into large acid-insoluble oligonucleotides, which are then degraded further into small acid-soluble oligonucleotides. The sequence is that of Exodeoxyribonuclease 7 small subunit from Mycobacterium avium (strain 104).